Here is a 471-residue protein sequence, read N- to C-terminus: MIVFRRFPTCLLHHIRQPASRSLLLESQRRSLSFTSYKYNSSHIDDDKSKKKLKNVFQMNSNRVIRKQKTKEELAKERFEEQLRSPNRFVRWGAIARSEKFSKGMTKYMIGAYVIFLIYGLFFTKKLFAKDKELERLLKKQEEGNANEYEALRIKELKGKLRRRDELKLEEYKKMQEEGIENFDDIRVQNFDQNKLNEQILPARDTTNFYQEKANEYDKAINMEERVIFLGKRRKWLMKHCQGDVLEVSCGTGRNIKYLDMSRINSITFLDSSENMMEITHKKFREKFPKYKKVAFVVGKAENLVDLAEKGKPSLENEKENQVKYDTIVEAFGLCSHEDPVKALNNFGKLLKPDGRIILLEHGRGQYDFINKILDNRAERRLNTWGCRWNLDLGEVLDDSDLELVEEKRTHLGTTWCIVAKRKGDVKKKDELGFVEKYLQSSIRKRMESFEKKDDMASKKELEPVPPVSKS.

The transit peptide at 1–39 (MIVFRRFPTCLLHHIRQPASRSLLLESQRRSLSFTSYKY) directs the protein to the mitochondrion. Topologically, residues 40–103 (NSSHIDDDKS…AIARSEKFSK (64 aa)) are mitochondrial matrix. The chain crosses the membrane as a helical span at residues 104–123 (GMTKYMIGAYVIFLIYGLFF). At 124-471 (TKKLFAKDKE…LEPVPPVSKS (348 aa)) the chain is on the mitochondrial intermembrane side. Positions 450–463 (FEKKDDMASKKELE) are enriched in basic and acidic residues. A disordered region spans residues 450-471 (FEKKDDMASKKELEPVPPVSKS).

The protein belongs to the methyltransferase superfamily. METL family.

It is found in the mitochondrion inner membrane. Mitochondrial methyltransferase which suppresses respiratory defects caused by OXA1 mutations when overexpressed. The chain is Methyltransferase OMS1, mitochondrial (OMS1) from Saccharomyces cerevisiae (strain ATCC 204508 / S288c) (Baker's yeast).